A 227-amino-acid polypeptide reads, in one-letter code: ATP synthase F(0) complex subunit a (227 aa).

6 helical membrane passes run 13–33 (YLLG…LFPA), 69–89 (WALL…LGLL), 98–118 (QLSL…IIGM), 132–152 (EGTP…SLFI), 179–199 (VFVL…VLFL), and 202–222 (LLEV…LSLY).

The protein belongs to the ATPase A chain family. As to quaternary structure, component of the ATP synthase complex composed at least of ATP5F1A/subunit alpha, ATP5F1B/subunit beta, ATP5MC1/subunit c (homooctomer), MT-ATP6/subunit a, MT-ATP8/subunit 8, ATP5ME/subunit e, ATP5MF/subunit f, ATP5MG/subunit g, ATP5MK/subunit k, ATP5MJ/subunit j, ATP5F1C/subunit gamma, ATP5F1D/subunit delta, ATP5F1E/subunit epsilon, ATP5PF/subunit F6, ATP5PB/subunit b, ATP5PD/subunit d, ATP5PO/subunit OSCP. ATP synthase complex consists of a soluble F(1) head domain (subunits alpha(3) and beta(3)) - the catalytic core - and a membrane F(0) domain - the membrane proton channel (subunits c, a, 8, e, f, g, k and j). These two domains are linked by a central stalk (subunits gamma, delta, and epsilon) rotating inside the F1 region and a stationary peripheral stalk (subunits F6, b, d, and OSCP). Interacts with DNAJC30; interaction is direct.

The protein resides in the mitochondrion inner membrane. The catalysed reaction is H(+)(in) = H(+)(out). Its function is as follows. Subunit a, of the mitochondrial membrane ATP synthase complex (F(1)F(0) ATP synthase or Complex V) that produces ATP from ADP in the presence of a proton gradient across the membrane which is generated by electron transport complexes of the respiratory chain. ATP synthase complex consist of a soluble F(1) head domain - the catalytic core - and a membrane F(1) domain - the membrane proton channel. These two domains are linked by a central stalk rotating inside the F(1) region and a stationary peripheral stalk. During catalysis, ATP synthesis in the catalytic domain of F(1) is coupled via a rotary mechanism of the central stalk subunits to proton translocation. With the subunit c (ATP5MC1), forms the proton-conducting channel in the F(0) domain, that contains two crucial half-channels (inlet and outlet) that facilitate proton movement from the mitochondrial intermembrane space (IMS) into the matrix. Protons are taken up via the inlet half-channel and released through the outlet half-channel, following a Grotthuss mechanism. The sequence is that of ATP synthase F(0) complex subunit a from Danio rerio (Zebrafish).